We begin with the raw amino-acid sequence, 340 residues long: PI-PLC X domain-containing protein 2 (340 aa).

In terms of domain architecture, PI-PLC X-box spans 42-215; sequence HLHNVPLSNL…KYQVLIFYHC (174 aa). Active-site residues include histidine 57 and histidine 132.

As to expression, expressed at highest levels in brain, followed by stomach and small intestine. Detected at low levels in kidney, ey, thymus and slkeletal muscle.

The protein localises to the nucleus. The catalysed reaction is a 1,2-diacyl-sn-glycero-3-phospho-(1D-myo-inositol) + H2O = 1D-myo-inositol 1-phosphate + a 1,2-diacyl-sn-glycerol + H(+). Catalyzes the hydrolysis of inositol from phosphatidylinositol (1,2-diacyl-sn-glycero-3-phospho-(1D-myo-inositol), PI). Could also hydrolyze various multi-phosphorylated derivatives of PI, such as phosphatidylinositol-4,5 bisphosphate (PIP2), releasing inositol-1,4,5-trisphosphate (IP3) and the protein kinase C activator diacylglycerol (DAG), therefore mediating cell signaling. The chain is PI-PLC X domain-containing protein 2 (Plcxd2) from Mus musculus (Mouse).